We begin with the raw amino-acid sequence, 161 residues long: 2-C-methyl-D-erythritol 2,4-cyclodiphosphate synthase (161 aa).

Residues aspartate 13 and histidine 15 each coordinate a divalent metal cation. 4-CDP-2-C-methyl-D-erythritol 2-phosphate is bound by residues 13 to 15 (DAH) and 40 to 41 (HS). Histidine 48 is a binding site for a divalent metal cation. 4-CDP-2-C-methyl-D-erythritol 2-phosphate is bound at residue 62–64 (DIG).

This sequence belongs to the IspF family. Homotrimer. The cofactor is a divalent metal cation.

It catalyses the reaction 4-CDP-2-C-methyl-D-erythritol 2-phosphate = 2-C-methyl-D-erythritol 2,4-cyclic diphosphate + CMP. It functions in the pathway isoprenoid biosynthesis; isopentenyl diphosphate biosynthesis via DXP pathway; isopentenyl diphosphate from 1-deoxy-D-xylulose 5-phosphate: step 4/6. Involved in the biosynthesis of isopentenyl diphosphate (IPP) and dimethylallyl diphosphate (DMAPP), two major building blocks of isoprenoid compounds. Catalyzes the conversion of 4-diphosphocytidyl-2-C-methyl-D-erythritol 2-phosphate (CDP-ME2P) to 2-C-methyl-D-erythritol 2,4-cyclodiphosphate (ME-CPP) with a corresponding release of cytidine 5-monophosphate (CMP). The polypeptide is 2-C-methyl-D-erythritol 2,4-cyclodiphosphate synthase (Deinococcus radiodurans (strain ATCC 13939 / DSM 20539 / JCM 16871 / CCUG 27074 / LMG 4051 / NBRC 15346 / NCIMB 9279 / VKM B-1422 / R1)).